The sequence spans 210 residues: Urease accessory protein UreF (210 aa).

Belongs to the UreF family. As to quaternary structure, ureD, UreF and UreG form a complex that acts as a GTP-hydrolysis-dependent molecular chaperone, activating the urease apoprotein by helping to assemble the nickel containing metallocenter of UreC. The UreE protein probably delivers the nickel.

It is found in the cytoplasm. In terms of biological role, required for maturation of urease via the functional incorporation of the urease nickel metallocenter. The polypeptide is Urease accessory protein UreF (Cereibacter sphaeroides (strain ATCC 17025 / ATH 2.4.3) (Rhodobacter sphaeroides)).